We begin with the raw amino-acid sequence, 242 residues long: MRHVAVIIPARYGATRFPGKPLADLAGKPLIAHVVERAQRARGVDVVAVATDDDRIVRAVRAAGGEAILTGPAATGTDRVAEAARKLAPRPEIVVNLQGDEPLIEPEAIEAVIGAMAGGARMATLARPLAEGELERTQVVKVVTRASGDALYFSRAPIPHRRAGGESPLARAHVGIYAFTAEFLETFTALAPGRLEGEEALEQLRALEHGYDIRVADTGYRGFGIDTPDDLERARALLAAGA.

Belongs to the KdsB family.

Its subcellular location is the cytoplasm. It carries out the reaction 3-deoxy-alpha-D-manno-oct-2-ulosonate + CTP = CMP-3-deoxy-beta-D-manno-octulosonate + diphosphate. Its pathway is nucleotide-sugar biosynthesis; CMP-3-deoxy-D-manno-octulosonate biosynthesis; CMP-3-deoxy-D-manno-octulosonate from 3-deoxy-D-manno-octulosonate and CTP: step 1/1. It functions in the pathway bacterial outer membrane biogenesis; lipopolysaccharide biosynthesis. Its function is as follows. Activates KDO (a required 8-carbon sugar) for incorporation into bacterial lipopolysaccharide in Gram-negative bacteria. The protein is 3-deoxy-manno-octulosonate cytidylyltransferase of Anaeromyxobacter dehalogenans (strain 2CP-C).